A 572-amino-acid chain; its full sequence is Transducin-like enhancer protein 6 (572 aa).

3 disordered regions span residues 1–30, 92–121, and 174–236; these read MTSR…SSPT, QSEE…SSFE, and KAKP…VQEP. A compositionally biased stretch (polar residues) spans 14 to 30; it reads KSTSPCPGISNSESSPT. 7 WD repeats span residues 284–322, 332–372, 377–416, 419–456, 458–497, 499–538, and 540–571; these read AHGE…AEDR, TPGA…LHVK, CAGL…VVRD, GYPD…KPLE, QFKS…RHMV, QKDS…KVFE, and PEMS…YQIT. S510 carries the post-translational modification Phosphoserine; by PKA.

This sequence belongs to the WD repeat Groucho/TLE family. As to quaternary structure, homodimers. Component of the subcortical maternal complex (SCMC), at least composed of NLRP5, KHDC3, OOEP, and TLE6. Within the complex, interacts with NLRP5, KHDC3 and OOEP. The SCMC may facilitate translocation of its components between the nuclear and cytoplasmic compartments. As part of the SCMC interacts with the SCMC-associated protein ZBED3. As part of the SCMC interacts with the SCMC-associated protein NLRP4F. As part of the SCMC interacts with the SCMC-associated protein CFL1/Cofilin-1. Interacts with FOXG1/BF-1; the interaction inhibits TLE1 interaction with FOXG1/BF-1. Interacts with NFATC1. Interacts with PAX6. Component of the subcortical maternal complex (SCMC), at least composed of NLRP5, KHDC3L, OOEP, and TLE6 isoform 1. Within the complex, interacts with NLRP5, KHDC3L and OOEP. The SCMC may facilitate translocation of its components between the nuclear and cytoplasmic compartments.

It localises to the cytoplasm. It is found in the nucleus. In terms of biological role, component of the subcortical maternal complex (SCMC), a multiprotein complex that plays a key role in early embryonic development. The SCMC complex is a structural constituent of cytoplasmic lattices, which consist in fibrous structures found in the cytoplasm of oocytes and preimplantation embryos. They are required to store maternal proteins critical for embryonic development, such as proteins that control epigenetic reprogramming of the preimplantation embryo, and prevent their degradation or activation. Also required for spermatogenesis: regulates spermatogonia proliferation and cell cycle progression, potentially via regulation of cell cycle regulatory genes such as; CEBPB, CEBPA, CSF3, PCNA, and CDK4. Suppresses FOXG1/BF-1-mediated transcriptional repression by inhibiting interaction of the transcriptional corepressor TLE1 with FOXG1 which promotes cortical neuron differentiation. Acts as a transcriptional corepressor of NFATC1-mediated gene expression by contributing to PAX6-mediated repression. Component of the subcortical maternal complex (SCMC), a multiprotein complex that plays a key role in early embryonic development. This chain is Transducin-like enhancer protein 6, found in Homo sapiens (Human).